A 1701-amino-acid polypeptide reads, in one-letter code: DDB1- and CUL4-associated factor homolog 1 (1701 aa).

A compositionally biased stretch (polar residues) spans 224 to 245 (HAEQSTSNGTSIPSIKITSVDG). Disordered regions lie at residues 224–269 (HAEQ…RRTE), 883–906 (DRPA…GNNF), and 932–961 (RPSN…TPTL). A LisH domain is found at 851 to 883 (NQAELLQLIHDHLLKSKLDSVAAMLKSEAKLPD). The span at 888 to 906 (RSINTPILNKPLPSSGNNF) shows a compositional bias: polar residues. 4 WD repeats span residues 1086 to 1125 (DHDE…DEGH), 1128 to 1169 (CHGS…QRVH), 1171 to 1210 (YRED…DTYL), and 1215 to 1252 (GLQY…HVFD). 2 short sequence motifs (DWD box) span residues 1237-1245 (LLWDVRKKN) and 1275-1282 (EVYDIRTF). Disordered regions lie at residues 1384-1559 (IGRL…DINL), 1566-1585 (EARV…PVDP), and 1641-1701 (LVRG…DDEA). 2 stretches are compositionally biased toward acidic residues: residues 1390–1423 (NEDE…DEEI) and 1451–1461 (DDNDTLDDLDF). The span at 1468 to 1479 (IIRRQAQRRRQR) shows a compositional bias: basic residues. Composition is skewed to acidic residues over residues 1494-1512 (EGSD…DPDF) and 1520-1543 (DLVD…DDDS). The segment covering 1567–1581 (ARVVENEGNNERPAR) has biased composition (basic and acidic residues). Over residues 1667–1678 (DTDEYQSEEEEI) the composition is skewed to acidic residues.

This sequence belongs to the VPRBP/DCAF1 family. In terms of assembly, component of the cul4-rbx1-ddb1-dcaf1 E3 ubiquitin-protein ligase complex.

It localises to the nucleus. It functions in the pathway protein modification; protein ubiquitination. Functionally, component of the cul4-rbx1-ddb1-dcaf1 E3 ubiquitin-protein ligase complex, dcaf1 may function as the substrate recognition module within this complex. This chain is DDB1- and CUL4-associated factor homolog 1 (dcaf-1), found in Caenorhabditis elegans.